The following is a 169-amino-acid chain: Peptide deformylase 1 (169 aa).

Fe cation-binding residues include Cys93 and His135. Residue Glu136 is part of the active site. His139 contacts Fe cation.

Belongs to the polypeptide deformylase family. It depends on Fe(2+) as a cofactor.

The catalysed reaction is N-terminal N-formyl-L-methionyl-[peptide] + H2O = N-terminal L-methionyl-[peptide] + formate. In terms of biological role, removes the formyl group from the N-terminal Met of newly synthesized proteins. Requires at least a dipeptide for an efficient rate of reaction. N-terminal L-methionine is a prerequisite for activity but the enzyme has broad specificity at other positions. This chain is Peptide deformylase 1, found in Corynebacterium efficiens (strain DSM 44549 / YS-314 / AJ 12310 / JCM 11189 / NBRC 100395).